The primary structure comprises 326 residues: Vascular endothelial growth factor D (326 aa).

The signal sequence occupies residues 1 to 21 (MYGEWAAVNILMMSYVYLVQG). A propeptide spanning residues 22 to 93 (FSIEHRAVKD…SRSTSHRSTR (72 aa)) is cleaved from the precursor. 3 disulfides stabilise this stretch: C116–C158, C147–C194, and C151–C196. Residues N160 and N190 are each glycosylated (N-linked (GlcNAc...) asparagine). A propeptide spanning residues 211–326 (SIQIPEEDQC…CRSMVFSLSP (116 aa)) is cleaved from the precursor. One copy of the 1; approximate repeat lies at 227–242 (CPVDMLWDNTKCKCVL). Residues 227–317 (CPVDMLWDNT…KHKMFHPDTC (91 aa)) are 4 X 16 AA repeats of C-X(10)-C-X-C-X(1,3)-C. Tandem repeats lie at residues 263 to 278 (CGPH…ECVC) and 282 to 298 (CPGD…CFEC). N-linked (GlcNAc...) asparagine glycosylation is present at N292. The 4; truncated repeat unit spans residues 306–317 (CQKHKMFHPDTC).

The protein belongs to the PDGF/VEGF growth factor family. As to quaternary structure, homodimer; non-covalent and antiparallel. Post-translationally, undergoes a complex proteolytic maturation which generates a variety of processed secreted forms with increased activity toward VEGFR-3 and VEGFR-2. VEGF-D first form an antiparallel homodimer linked by disulfide bonds before secretion. The fully processed VEGF-D is composed mostly of two VEGF homology domains (VHDs) bound by non-covalent interactions. Highly expressed in the spleen, kidney, lung, tongue, ovary and mammary gland.

It localises to the secreted. In terms of biological role, growth factor active in angiogenesis, lymphangiogenesis and endothelial cell growth, stimulating their proliferation and migration and also has effects on the permeability of blood vessels. May function in the formation of the venous and lymphatic vascular systems during embryogenesis, and also in the maintenance of differentiated lymphatic endothelium in adults. Binds and activates VEGFR-3 (Flt4) receptor. In Rattus norvegicus (Rat), this protein is Vascular endothelial growth factor D.